A 232-amino-acid polypeptide reads, in one-letter code: Large ribosomal subunit protein uL1 (232 aa).

It belongs to the universal ribosomal protein uL1 family. As to quaternary structure, part of the 50S ribosomal subunit.

Functionally, binds directly to 23S rRNA. The L1 stalk is quite mobile in the ribosome, and is involved in E site tRNA release. In terms of biological role, protein L1 is also a translational repressor protein, it controls the translation of the L11 operon by binding to its mRNA. This Rhizorhabdus wittichii (strain DSM 6014 / CCUG 31198 / JCM 15750 / NBRC 105917 / EY 4224 / RW1) (Sphingomonas wittichii) protein is Large ribosomal subunit protein uL1.